The chain runs to 276 residues: Molybdenum storage protein subunit alpha (276 aa).

Octamer consisting of 4 alpha and 4 beta chains.

Its subcellular location is the cytoplasm. Intracellular storage of molybdenum. Binds polyoxomolybdates. Can bind at least 90 molybdenum atoms per protein molecule. This chain is Molybdenum storage protein subunit alpha, found in Azotobacter vinelandii (strain DJ / ATCC BAA-1303).